The chain runs to 534 residues: Pentatricopeptide repeat-containing protein At1g07590, mitochondrial (534 aa).

The transit peptide at 1–20 (MRSIIALMRQREYFVQAIRR) directs the protein to the mitochondrion. PPR repeat units follow at residues 165 to 199 (NELL…GYRT), 200 to 234 (SHLV…KATP), 235 to 269 (HVST…GVEP), 270 to 300 (NEVS…IEKS), 305 to 335 (NWST…IRGF), 339 to 369 (RSKS…MKNV), 374 to 408 (ETEQ…GFKP), 409 to 443 (NSIT…KTSK), and 451 to 485 (WLET…KYNR).

Belongs to the PPR family. P subfamily.

The protein resides in the mitochondrion. The protein is Pentatricopeptide repeat-containing protein At1g07590, mitochondrial of Arabidopsis thaliana (Mouse-ear cress).